A 414-amino-acid chain; its full sequence is 2-epi-5-epi-valiolone synthase (414 aa).

NAD(+)-binding positions include Asp-70, 101 to 104 (ESAK), 134 to 138 (GVLTD), 158 to 159 (TT), Lys-171, Lys-180, and 198 to 201 (FLAT). Lys-171 is a catalytic residue. 3 residues coordinate Zn(2+): Glu-213, His-284, and His-300.

Belongs to the sugar phosphate cyclases superfamily. EEVS family. NAD(+) is required as a cofactor. The cofactor is Zn(2+).

It catalyses the reaction D-sedoheptulose 7-phosphate = 2-epi-5-epi-valiolone + phosphate. It participates in antibiotic biosynthesis. Catalyzes the cyclization of D-sedoheptulose 7-phosphate to 2-epi-5-epi-valiolone. Involved in validamycin biosynthesis. In Streptomyces hygroscopicus subsp. jinggangensis (strain 5008), this protein is 2-epi-5-epi-valiolone synthase.